Consider the following 299-residue polypeptide: Aspartate carbamoyltransferase catalytic subunit (299 aa).

Residues Arg-51 and Thr-52 each coordinate carbamoyl phosphate. Lys-79 contacts L-aspartate. Residues Arg-101, His-130, and Gln-133 each coordinate carbamoyl phosphate. The L-aspartate site is built by Arg-163 and Arg-215. Carbamoyl phosphate is bound by residues Gly-256 and Pro-257.

The protein belongs to the aspartate/ornithine carbamoyltransferase superfamily. ATCase family. Heterododecamer (2C3:3R2) of six catalytic PyrB chains organized as two trimers (C3), and six regulatory PyrI chains organized as three dimers (R2).

It carries out the reaction carbamoyl phosphate + L-aspartate = N-carbamoyl-L-aspartate + phosphate + H(+). Its pathway is pyrimidine metabolism; UMP biosynthesis via de novo pathway; (S)-dihydroorotate from bicarbonate: step 2/3. Its function is as follows. Catalyzes the condensation of carbamoyl phosphate and aspartate to form carbamoyl aspartate and inorganic phosphate, the committed step in the de novo pyrimidine nucleotide biosynthesis pathway. The protein is Aspartate carbamoyltransferase catalytic subunit of Ehrlichia chaffeensis (strain ATCC CRL-10679 / Arkansas).